Consider the following 1255-residue polypeptide: Receptor tyrosine-protein kinase erbB-2 (1255 aa).

An N-terminal signal peptide occupies residues 1 to 22; the sequence is MELAALCRWGLLLALLPPGAAS. At 23 to 652 the chain is on the extracellular side; it reads TQVCTGTDMK…PAEQRASPLT (630 aa). Cysteines 26 and 53 form a disulfide. Asparagine 68 and asparagine 124 each carry an N-linked (GlcNAc...) asparagine glycan. 16 disulfide bridges follow: cysteine 162–cysteine 192, cysteine 195–cysteine 204, cysteine 199–cysteine 212, cysteine 220–cysteine 227, cysteine 224–cysteine 235, cysteine 236–cysteine 244, cysteine 240–cysteine 252, cysteine 255–cysteine 264, cysteine 268–cysteine 295, cysteine 299–cysteine 311, cysteine 315–cysteine 331, cysteine 334–cysteine 338, cysteine 342–cysteine 367, cysteine 475–cysteine 504, cysteine 511–cysteine 520, and cysteine 515–cysteine 528. Threonine 182 is subject to Phosphothreonine. The N-linked (GlcNAc...) asparagine glycan is linked to asparagine 187. An N-linked (GlcNAc...) asparagine glycan is attached at asparagine 259. An N-linked (GlcNAc...) asparagine glycan is attached at asparagine 530. 8 disulfides stabilise this stretch: cysteine 531–cysteine 540, cysteine 544–cysteine 560, cysteine 563–cysteine 576, cysteine 567–cysteine 584, cysteine 587–cysteine 596, cysteine 600–cysteine 623, cysteine 626–cysteine 634, and cysteine 630–cysteine 642. Residue asparagine 571 is glycosylated (N-linked (GlcNAc...) asparagine). Asparagine 629 carries an N-linked (GlcNAc...) asparagine glycan. A helical transmembrane segment spans residues 653-675; it reads SIISAVVGILLVVVLGVVFGILI. Positions 676 to 689 are required for interaction with KPNB1 and EEA1; that stretch reads KRRQQKIRKYTMRR. A Nuclear localization signal motif is present at residues 676–689; that stretch reads KRRQQKIRKYTMRR. Residues 676 to 1255 are Cytoplasmic-facing; the sequence is KRRQQKIRKY…PEYLGLDVPV (580 aa). Residues 720–987 form the Protein kinase domain; it reads LRKVKVLGSG…RMARDPQRFV (268 aa). ATP-binding positions include 726–734 and lysine 753; that span reads LGSGAFGTV. Catalysis depends on aspartate 845, which acts as the Proton acceptor. Tyrosine 877 carries the phosphotyrosine modification. Disordered regions lie at residues 1035 to 1179 and 1196 to 1255; these read PAPG…GKNG and YLTP…DVPV. Serine 1054, serine 1078, serine 1083, and serine 1107 each carry phosphoserine. A phosphotyrosine mark is found at tyrosine 1112 and tyrosine 1139. A compositionally biased stretch (pro residues) spans 1146–1155; it reads RPQPPSPREG. Residue serine 1151 is modified to Phosphoserine. Threonine 1166 is subject to Phosphothreonine. The interaction with PIK3C2B stretch occupies residues 1195–1197; the sequence is EYL. The residue at position 1196 (tyrosine 1196) is a Phosphotyrosine. Residue tyrosine 1248 is modified to Phosphotyrosine; by autocatalysis.

It belongs to the protein kinase superfamily. Tyr protein kinase family. EGF receptor subfamily. As to quaternary structure, homodimer. Heterodimer with EGFR, ERBB3 and ERBB4. Part of a complex with EGFR and either PIK3C2A or PIK3C2B. May interact with PIK3C2B when phosphorylated on Tyr-1196. Interacts with PLXNB1. Interacts (when phosphorylated on Tyr-1248) with MEMO1. Interacts with MUC1; the interaction is enhanced by heregulin (HRG). Interacts (when phosphorylated on Tyr-1139) with GRB7 (via SH2 domain). Interacts (when phosphorylated on Tyr-1248) with ERBIN. Interacts with KPNB1, RANBP2, EEA1, CRM1 and CLTC. Interacts with PTK6. Interacts with RPA194 and ACTB. Interacts with PRKCABP, SRC and MYOC. Interacts (preferentially with the tyrosine phosphorylated form) with CPNE3; this interaction occurs at the cell membrane and is increased in a growth factor heregulin-dependent manner. Interacts with HSP90AA1 and HSP90AB1 in an ATP-dependent manner; the interaction suppresses ERBB2 kinase activity. Interacts with SORL1; this interaction regulates ERBB2 subcellular distribution by promoting its recycling after internalization from endosomes back to the plasma membrane, hence stimulates ERBB2-mediated signaling. Interacts with SH3BGRL. Interacts with ROR1. Post-translationally, autophosphorylated. Autophosphorylation occurs in trans, i.e. one subunit of the dimeric receptor phosphorylates tyrosine residues on the other subunit. Ligand-binding increases phosphorylation on tyrosine residues. Signaling via SEMA4C promotes phosphorylation at Tyr-1248. Dephosphorylated by PTPN12. As to expression, expressed in a variety of tumor tissues including primary breast tumors and tumors from small bowel, esophagus, kidney and mouth.

Its subcellular location is the cell membrane. It is found in the cell projection. The protein resides in the ruffle membrane. It localises to the early endosome. The protein localises to the cytoplasm. Its subcellular location is the perinuclear region. It is found in the nucleus. It carries out the reaction L-tyrosyl-[protein] + ATP = O-phospho-L-tyrosyl-[protein] + ADP + H(+). With respect to regulation, activated by dimerization. Not activated by EGF, TGF-alpha and amphiregulin. Interaction with PTK6 increases its intrinsic kinase activity. Functionally, protein tyrosine kinase that is part of several cell surface receptor complexes, but that apparently needs a coreceptor for ligand binding. Essential component of a neuregulin-receptor complex, although neuregulins do not interact with it alone. GP30 is a potential ligand for this receptor. Regulates outgrowth and stabilization of peripheral microtubules (MTs). Upon ERBB2 activation, the MEMO1-RHOA-DIAPH1 signaling pathway elicits the phosphorylation and thus the inhibition of GSK3B at cell membrane. This prevents the phosphorylation of APC and CLASP2, allowing its association with the cell membrane. In turn, membrane-bound APC allows the localization of MACF1 to the cell membrane, which is required for microtubule capture and stabilization. Its function is as follows. In the nucleus is involved in transcriptional regulation. Associates with the 5'-TCAAATTC-3' sequence in the PTGS2/COX-2 promoter and activates its transcription. Implicated in transcriptional activation of CDKN1A; the function involves STAT3 and SRC. Involved in the transcription of rRNA genes by RNA Pol I and enhances protein synthesis and cell growth. This Homo sapiens (Human) protein is Receptor tyrosine-protein kinase erbB-2 (ERBB2).